A 303-amino-acid polypeptide reads, in one-letter code: Sushi domain-containing protein 6 (303 aa).

Residues 1-39 (MCHGRIAPKSTSVFAVASVGHGVFLPLVILCTLLGDGLA) form the signal peptide. One can recognise a Sushi domain in the interval 40 to 104 (SVCPLPPEPE…KPAMEISCRL (65 aa)). The Extracellular portion of the chain corresponds to 40-120 (SVCPLPPEPE…HTSLGVPTLS (81 aa)). 2 disulfide bridges follow: Cys42–Cys89 and Cys74–Cys102. The helical transmembrane segment at 121-141 (IVASTASSVALILLLVVLFVL) threads the bilayer. At 142–303 (LQPKLKSFHH…TDDIPLLKEA (162 aa)) the chain is on the cytoplasmic side. Disordered regions lie at residues 199-237 (VLSEGSGPSGRSVPREQQLPDQGACSSAGGEDEAPGQSG) and 263-282 (GSGNRQLAHKETADSENSDI).

Its subcellular location is the membrane. Functionally, may play a role in growth-suppressive activity and cell death. May be involved in the production of chemokine molecules in umbilical vein endothelial cells (HUVECs) cultured in THP1 monocyte LPS-induced medium. Plays a role in preventing tumor onset. The chain is Sushi domain-containing protein 6 from Homo sapiens (Human).